The following is a 387-amino-acid chain: Delta(12)-acyl-lipid-desaturase (387 aa).

The tract at residues 1–31 (MGAGGRMTVPNKWEGEGDEKSQKPVQRVPSA) is disordered. Over residues 13 to 22 (WEGEGDEKSQ) the composition is skewed to basic and acidic residues. The next 2 helical transmembrane spans lie at 58 to 78 (SYVL…TTYI) and 88 to 108 (AAWP…WVIA). The Histidine box-1 signature appears at 109-113 (HECGH). Residues 121 to 141 (WVDDCVGLVLHSALLVPYFSW) traverse the membrane as a helical segment. The short motif at 145–149 (HRRHH) is the Histidine box-2 element. Helical transmembrane passes span 183–203 (VMTL…LNVS), 229–249 (IYIS…IAAA), and 251–271 (GLAW…AFLV). The Histidine box-3 signature appears at 319-323 (HVAHH).

It belongs to the fatty acid desaturase type 1 family.

It localises to the membrane. It functions in the pathway lipid metabolism; polyunsaturated fatty acid biosynthesis. In terms of biological role, delta(12)-fatty acid desaturase producing in a heterologous system linoleic acid (18:2(9Z,12Z)) and to a lower extent hexadecadienoic acid (16:2(9Z,12Z)). The polypeptide is Delta(12)-acyl-lipid-desaturase (Punica granatum (Pomegranate)).